The primary structure comprises 213 residues: Golgi apparatus membrane protein TVP23 homolog A (213 aa).

Transmembrane regions (helical) follow at residues 32 to 52 (PLAT…YVSC), 54 to 74 (WFSK…SLDF), 123 to 143 (IFWL…FSTL), and 150 to 170 (WLAL…GYIL).

It belongs to the TVP23 family.

The protein resides in the membrane. This Homo sapiens (Human) protein is Golgi apparatus membrane protein TVP23 homolog A (TVP23A).